The chain runs to 304 residues: Acetaldehyde dehydrogenase 1 (304 aa).

11–14 serves as a coordination point for NAD(+); it reads SGNI. The active-site Acyl-thioester intermediate is C130. Residues 161-169 and N272 contribute to the NAD(+) site; that span reads SVGPGTRAN.

This sequence belongs to the acetaldehyde dehydrogenase family.

The enzyme catalyses acetaldehyde + NAD(+) + CoA = acetyl-CoA + NADH + H(+). The chain is Acetaldehyde dehydrogenase 1 (lapF) from Azoarcus sp. (strain BH72).